The primary structure comprises 108 residues: Nucleoid-associated protein ACP_0492 (108 aa).

The protein belongs to the YbaB/EbfC family. In terms of assembly, homodimer.

It localises to the cytoplasm. The protein resides in the nucleoid. Its function is as follows. Binds to DNA and alters its conformation. May be involved in regulation of gene expression, nucleoid organization and DNA protection. The sequence is that of Nucleoid-associated protein ACP_0492 from Acidobacterium capsulatum (strain ATCC 51196 / DSM 11244 / BCRC 80197 / JCM 7670 / NBRC 15755 / NCIMB 13165 / 161).